A 26-amino-acid chain; its full sequence is Delta-conotoxin Am2766 (26 aa).

3 disulfides stabilise this stretch: C1–C16, C8–C20, and C15–C24. The residue at position 26 (E26) is a Glutamic acid 1-amide.

In terms of tissue distribution, expressed by the venom duct.

Its subcellular location is the secreted. Functionally, delta-conotoxins bind to site 6 of voltage-gated sodium channels (Nav) and inhibit the inactivation process. This chain is Delta-conotoxin Am2766, found in Conus amadis (Amadis cone).